A 328-amino-acid chain; its full sequence is Nucleotide-binding protein Blon_1085/BLIJ_1109 (328 aa).

The tract at residues 1 to 33 is disordered; the sequence is MSQQTTIRDTGEAAATNAPANSATSTSTPDNQP. The segment covering 13–29 has biased composition (low complexity); it reads AAATNAPANSATSTSTP. Residue 46 to 53 participates in ATP binding; sequence GMSGAGRS. Position 101–104 (101–104) interacts with GTP; the sequence is DVRS.

It belongs to the RapZ-like family.

Functionally, displays ATPase and GTPase activities. The sequence is that of Nucleotide-binding protein Blon_1085/BLIJ_1109 from Bifidobacterium longum subsp. infantis (strain ATCC 15697 / DSM 20088 / JCM 1222 / NCTC 11817 / S12).